Here is a 541-residue protein sequence, read N- to C-terminus: CTP synthase (541 aa).

Residues 1–271 (MVGKLNPTRF…DTQILKHFDV (271 aa)) form an amidoligase domain region. Residue Ser-19 participates in CTP binding. Ser-19 serves as a coordination point for UTP. ATP contacts are provided by residues 20 to 25 (SLGKGL) and Asp-77. Asp-77 and Glu-145 together coordinate Mg(2+). CTP is bound by residues 152-154 (DIE), 192-197 (KTKPTQ), and Lys-228. UTP contacts are provided by residues 192–197 (KTKPTQ) and Lys-228. The Glutamine amidotransferase type-1 domain occupies 296 to 537 (VIAIVGKYVT…VTSTLQVKKA (242 aa)). Gly-355 is a binding site for L-glutamine. The active-site Nucleophile; for glutamine hydrolysis is the Cys-382. Residues 383–386 (LGMQ), Glu-406, and Arg-465 each bind L-glutamine. Catalysis depends on residues His-510 and Glu-512.

This sequence belongs to the CTP synthase family. As to quaternary structure, homotetramer.

It carries out the reaction UTP + L-glutamine + ATP + H2O = CTP + L-glutamate + ADP + phosphate + 2 H(+). It catalyses the reaction L-glutamine + H2O = L-glutamate + NH4(+). The catalysed reaction is UTP + NH4(+) + ATP = CTP + ADP + phosphate + 2 H(+). It functions in the pathway pyrimidine metabolism; CTP biosynthesis via de novo pathway; CTP from UDP: step 2/2. Allosterically activated by GTP, when glutamine is the substrate; GTP has no effect on the reaction when ammonia is the substrate. The allosteric effector GTP functions by stabilizing the protein conformation that binds the tetrahedral intermediate(s) formed during glutamine hydrolysis. Inhibited by the product CTP, via allosteric rather than competitive inhibition. In terms of biological role, catalyzes the ATP-dependent amination of UTP to CTP with either L-glutamine or ammonia as the source of nitrogen. Regulates intracellular CTP levels through interactions with the four ribonucleotide triphosphates. This is CTP synthase from Anaplasma phagocytophilum (strain HZ).